The following is a 378-amino-acid chain: Merozoite surface protein P41 (378 aa).

The signal sequence occupies residues 1 to 20 (MKGVIFCLVVLLWRQAWVSS). The 113-residue stretch at 21–133 (KSHKCDFTKE…LKINRFLKDD (113 aa)) folds into the 6-Cys 1 domain. 3 disulfide bridges follow: cysteine 25-cysteine 42, cysteine 56-cysteine 113, and cysteine 64-cysteine 111. Residues asparagine 77, asparagine 149, asparagine 182, and asparagine 205 are each glycosylated (N-linked (GlcNAc...) asparagine). Residues 241-375 (VIKGCDFGNN…GESEVVLNSF (135 aa)) enclose the 6-Cys 2 domain. Intrachain disulfides connect cysteine 245-cysteine 270, cysteine 284-cysteine 348, and cysteine 297-cysteine 346. N-linked (GlcNAc...) asparagine glycosylation is present at asparagine 351.

As to quaternary structure, heterodimer; heterodimerizes with PF12. May form an antiparallel heterodimer with PF12. Post-translationally, processed into a soluble form.

The protein resides in the cell surface. The protein localises to the cell membrane. This Plasmodium falciparum (isolate 3D7) protein is Merozoite surface protein P41 (PF41).